Here is an 89-residue protein sequence, read N- to C-terminus: MSLDTTEKQQLINSHQTHATDTGSAEVQVAMLSERISKLSSHLQQNIHDYSSRQGLLKMIGRRKRLLGYVRGKSEQRYSDLISKLGIRG.

The disordered stretch occupies residues 1–24 (MSLDTTEKQQLINSHQTHATDTGS). A compositionally biased stretch (polar residues) spans 8-24 (KQQLINSHQTHATDTGS).

The protein belongs to the universal ribosomal protein uS15 family. In terms of assembly, part of the 30S ribosomal subunit. Forms a bridge to the 50S subunit in the 70S ribosome, contacting the 23S rRNA.

Functionally, one of the primary rRNA binding proteins, it binds directly to 16S rRNA where it helps nucleate assembly of the platform of the 30S subunit by binding and bridging several RNA helices of the 16S rRNA. Its function is as follows. Forms an intersubunit bridge (bridge B4) with the 23S rRNA of the 50S subunit in the ribosome. The chain is Small ribosomal subunit protein uS15 from Synechococcus sp. (strain CC9311).